The following is a 311-amino-acid chain: Homoserine kinase (311 aa).

88–98 contacts ATP; that stretch reads PEGLGLGSSGA.

It belongs to the GHMP kinase family. Homoserine kinase subfamily.

It localises to the cytoplasm. The enzyme catalyses L-homoserine + ATP = O-phospho-L-homoserine + ADP + H(+). The protein operates within amino-acid biosynthesis; L-threonine biosynthesis; L-threonine from L-aspartate: step 4/5. Functionally, catalyzes the ATP-dependent phosphorylation of L-homoserine to L-homoserine phosphate. The polypeptide is Homoserine kinase (Saccharolobus solfataricus (strain ATCC 35092 / DSM 1617 / JCM 11322 / P2) (Sulfolobus solfataricus)).